The sequence spans 649 residues: MMNQPLIELKNIVRRYGHGDTETTVLKSINLKIYAGEMVAIVGASGSGKSTLMNLLGVLDQADDGEYLFRGRQISTLSSDELADLRCYHFGFVFQRYHLLPHLTAVENVEIPAIYSAMEKEKRIERAQKLLCRLGLENQLKHKPSQLSGGQQQRVSIARALMNGGEIILADEPTGALDSQSSQEVLSVLKTLNHQGHTVVLITHDMQIASHADRIITMKDGEIIADSGVTQNLMKSSAQEVTPQLSSMHYLATLRRYHAAFLMAMHMMFAHKIRTLLTMLGIIIGIAAVVCVIALGEGAKNKVLAEFSALGNNTIDIYPGKNWGDPDAIKIQTLNQVDLALLRQQPYLKGATPQISVDLPLRFLNRTVNASVYGVSDAFFQLRKHRLLSGRWFNAHDMATHQAVSVIDKKSQQVIFGTESAVGKTVFIGQIPILIVGVVETPPQNIEGQRATIWLPYNTVVSRLYNQSYFQQITVQVKEHIAPDLAEKAIIDLLTIQHGRKDFFTFSSRKFLQSLQRTTQTLTMMISSIAFISLVVGGIGVMNIMLVSVIERTREIGIRVAVGAKEKDILHQFLIESASVSLLGGMLGVLLSLLLGGLFSAFTDSIKMQFTFSSFLIAFVCSSMIGMIFGYFPARNAARLKPVVALSQE.

Residues 7–245 (IELKNIVRRY…SSAQEVTPQL (239 aa)) enclose the ABC transporter domain. An ATP-binding site is contributed by 43–50 (GASGSGKS). Transmembrane regions (helical) follow at residues 276 to 296 (LLTMLGIIIGIAAVVCVIALG), 529 to 549 (IAFISLVVGGIGVMNIMLVSV), 582 to 602 (LLGGMLGVLLSLLLGGLFSAF), and 612 to 632 (FSSFLIAFVCSSMIGMIFGYF).

Belongs to the ABC transporter superfamily. Macrolide exporter (TC 3.A.1.122) family. As to quaternary structure, homodimer. Part of the tripartite efflux system MacAB-TolC, which is composed of an inner membrane transporter, MacB, a periplasmic membrane fusion protein, MacA, and an outer membrane component, TolC. The complex forms a large protein conduit and can translocate molecules across both the inner and outer membranes. Interacts with MacA.

Its subcellular location is the cell inner membrane. Functionally, part of the tripartite efflux system MacAB-TolC. MacB is a non-canonical ABC transporter that contains transmembrane domains (TMD), which form a pore in the inner membrane, and an ATP-binding domain (NBD), which is responsible for energy generation. Confers resistance against macrolides. The polypeptide is Macrolide export ATP-binding/permease protein MacB (Pasteurella multocida (strain Pm70)).